The chain runs to 388 residues: F-box protein At4g00893 (388 aa).

The interval 1-30 is disordered; it reads MLPSPSVHMASPPPSLNMASHPPSPATASR. One can recognise an F-box domain in the interval 42 to 88; it reads NPSFADLPSSLIEEIMLLLVLKDNIRASAACKSWYEAGVSVRVVDKH.

In Arabidopsis thaliana (Mouse-ear cress), this protein is F-box protein At4g00893.